Reading from the N-terminus, the 339-residue chain is Probable thylakoid lumen protein sll0997 (339 aa).

Positions 1 to 26 are cleaved as a signal peptide; that stretch reads MAPYQSFHIGLLGLALASVWPLSACA.

The protein resides in the cellular thylakoid lumen. The protein is Probable thylakoid lumen protein sll0997 of Synechocystis sp. (strain ATCC 27184 / PCC 6803 / Kazusa).